Consider the following 526-residue polypeptide: ATP synthase subunit alpha (526 aa).

Position 178 to 185 (178 to 185 (GDRQTGKT)) interacts with ATP.

This sequence belongs to the ATPase alpha/beta chains family. F-type ATPases have 2 components, CF(1) - the catalytic core - and CF(0) - the membrane proton channel. CF(1) has five subunits: alpha(3), beta(3), gamma(1), delta(1), epsilon(1). CF(0) has four main subunits: a(1), b(1), b'(1) and c(9-12).

It is found in the cell membrane. It carries out the reaction ATP + H2O + 4 H(+)(in) = ADP + phosphate + 5 H(+)(out). Produces ATP from ADP in the presence of a proton gradient across the membrane. The alpha chain is a regulatory subunit. In Roseiflexus castenholzii (strain DSM 13941 / HLO8), this protein is ATP synthase subunit alpha.